A 218-amino-acid chain; its full sequence is Large ribosomal subunit protein uL3 (218 aa).

Residues R133–G158 form a disordered region.

It belongs to the universal ribosomal protein uL3 family. As to quaternary structure, part of the 50S ribosomal subunit. Forms a cluster with proteins L14 and L19.

Its function is as follows. One of the primary rRNA binding proteins, it binds directly near the 3'-end of the 23S rRNA, where it nucleates assembly of the 50S subunit. The chain is Large ribosomal subunit protein uL3 from Mycolicibacterium vanbaalenii (strain DSM 7251 / JCM 13017 / BCRC 16820 / KCTC 9966 / NRRL B-24157 / PYR-1) (Mycobacterium vanbaalenii).